The following is a 495-amino-acid chain: Ectonucleoside triphosphate diphosphohydrolase 2 (495 aa).

The Cytoplasmic segment spans residues 1–7; sequence MAGKVRS. A helical membrane pass occupies residues 8 to 28; that stretch reads LLPPLLLAAAGLAGLLLLCVP. Topologically, residues 29-462 are extracellular; the sequence is TRDVREPPAL…PGLRKGTDFS (434 aa). An N-linked (GlcNAc...) asparagine glycan is attached at asparagine 64. A disulfide bridge links cysteine 75 with cysteine 99. N-linked (GlcNAc...) asparagine glycosylation occurs at asparagine 129. The active-site Proton acceptor is the glutamate 165. 204-208 contacts ATP; it reads GASTQ. 4 disulfide bridges follow: cysteine 242/cysteine 284, cysteine 265/cysteine 310, cysteine 323/cysteine 328, and cysteine 377/cysteine 399. The N-linked (GlcNAc...) asparagine glycan is linked to asparagine 294. 2 N-linked (GlcNAc...) asparagine glycosylation sites follow: asparagine 378 and asparagine 443. A helical transmembrane segment spans residues 463–483; sequence SWVVLLLLFASALLAALVLLL. Topologically, residues 484 to 495 are cytoplasmic; the sequence is RQVHSAKLPSTI.

This sequence belongs to the GDA1/CD39 NTPase family. The cofactor is Ca(2+). It depends on Mg(2+) as a cofactor. As to expression, brain, placenta, skeletal muscle, kidney, pancreas, heart, ovary, testis, colon, small intestine, prostate and pancreas. No expression in adult thymus, spleen, lung, liver and peripheral blood leukocytes.

It localises to the cell membrane. The protein resides in the endoplasmic reticulum membrane. Its function is as follows. In the nervous system, could hydrolyze ATP and other nucleotides to regulate purinergic neurotransmission. Hydrolyzes ADP only to a marginal extent. The order of activity with different substrates is ATP &gt; GTP &gt; CTP = ITP &gt; UTP &gt;&gt; ADP = UDP. In Homo sapiens (Human), this protein is Ectonucleoside triphosphate diphosphohydrolase 2 (ENTPD2).